A 1707-amino-acid chain; its full sequence is Chromatin-remodeling ATPase INO80 (1707 aa).

5 disordered regions span residues Met1 to Asn156, Gln178 to Glu314, Gln410 to Ala580, Ala627 to Ala649, and Asp722 to Leu748. The span at Tyr7 to Pro16 shows a compositional bias: polar residues. Positions Pro42–Ala55 are enriched in pro residues. Composition is skewed to polar residues over residues Ser86–Pro99 and Ser110–Thr124. Pro residues-rich tracts occupy residues Leu209 to Ala226 and Thr235 to Leu249. 6 stretches are compositionally biased toward basic and acidic residues: residues Arg264–Ala284, Glu426–Gln463, Ser524–Ala535, Pro552–Glu572, Lys633–Ala647, and Glu734–Ile746. The stretch at Ala395 to Ser478 forms a coiled coil. The region spanning Ile593 to Gly718 is the DBINO domain. Residues Gln635–Glu706 adopt a coiled-coil conformation. In terms of domain architecture, Helicase ATP-binding spans Val847 to Thr1019. Asp860–Thr867 provides a ligand contact to ATP. Residues Asp970–Gln973 carry the DEAQ box motif. The 161-residue stretch at Lys1423–Glu1583 folds into the Helicase C-terminal domain. Residues Glu1643 to Leu1707 form a disordered region. Polar residues predominate over residues Pro1659 to Pro1673. Over residues Lys1676–Lys1692 the composition is skewed to basic residues. The segment covering Thr1693–Leu1707 has biased composition (basic and acidic residues).

Belongs to the SNF2/RAD54 helicase family. In terms of assembly, component of the INO80 chromatin-remodeling complex.

The protein resides in the nucleus. The catalysed reaction is ATP + H2O = ADP + phosphate + H(+). In terms of biological role, ATPase component of the INO80 complex which remodels chromatin by shifting nucleosomes and is involved in DNA repair. In Aspergillus clavatus (strain ATCC 1007 / CBS 513.65 / DSM 816 / NCTC 3887 / NRRL 1 / QM 1276 / 107), this protein is Chromatin-remodeling ATPase INO80 (ino80).